Consider the following 1152-residue polypeptide: Syntaxin-binding protein 5 (1152 aa).

A disordered region spans residues 14 to 35; it reads TAGSSSASQQQQQQQHPPGNRE. A compositionally biased stretch (low complexity) spans 17–28; that stretch reads SSSASQQQQQQQ. WD repeat units follow at residues 62–95, 102–141, 146–182, 201–235, 241–273, 295–337, 345–379, 401–478, 506–620, and 634–696; these read SALAFDPVQKILAVGTQTGALRLFGRPGVECYCQ, VIQLQFLINEGALVSALADDTLHLWNLRQKRPAVLHSLKF, VTFCHLPFQSKWLYVGTERGNIHIVNVESFTLSGYVI, HISDNPMDEGKLLIGFESGTVVLWDLKSKKADYRY, IHSVAWHHEGKQFICSHSDGTLTIWNVRSPAKP, PILK…KSTA, IVDFLTLCETPYPNDFQEPYAVVVLLEKDLVLIDL, TCCE…YKLK, QIIS…ELVI, and TSLA…SGAG. Disordered regions lie at residues 555–596 and 675–731; these read VDTP…GLRD and SNDP…QKVN. At serine 693 the chain carries Phosphoserine. Over residues 713–722 the composition is skewed to low complexity; the sequence is SPTSGSSSPH. Phosphoserine occurs at positions 724 and 760. Threonine 763 is modified (phosphothreonine). At serine 783 the chain carries Phosphoserine. Threonine 785 is modified (phosphothreonine). Serine 786 carries the phosphoserine modification. WD repeat units follow at residues 795-852, 861-935, 940-984, and 998-1021; these read ISAL…SGTI, RMAF…QSCA, ITET…LDVY, and CFANNGQALYLVSPTEIQRLTYSQ. Over residues 883–893 the composition is skewed to basic and acidic residues; the sequence is NVAEEKDEKEK. The tract at residues 883-907 is disordered; the sequence is NVAEEKDEKEKLKKRRPVSVSPSSS. A phosphoserine mark is found at serine 901 and serine 903. Threonine 1040 carries the post-translational modification Phosphothreonine. Phosphoserine occurs at positions 1059 and 1132. Residues 1087-1147 enclose the v-SNARE coiled-coil homology domain; that stretch reads GIEGVKGAAS…HEMMLKYKDK (61 aa).

Belongs to the WD repeat L(2)GL family. In terms of assembly, part of a complex that contains STX1, STXBP5, SNAP25 and SYT1. Interacts with STX1A and STX4A via its v-SNARE homology domain. Part of a complex that contains STXBP5, STX4A and SNAP23. In terms of tissue distribution, detected in heart, spleen, lung, skeletal muscle, liver and kidney (at protein level). Detected in brain, particularly in the olfactory bulb and in hippocampus. Detected in the tenia tecta and in the piriform layer of the brain cortex.

It is found in the cytoplasm. Its subcellular location is the cell membrane. It localises to the membrane. In terms of biological role, plays a regulatory role in calcium-dependent exocytosis and neurotransmitter release. Inhibits membrane fusion between transport vesicles and the plasma membrane. May modulate the assembly of trans-SNARE complexes between transport vesicles and the plasma membrane. Competes with STXBP1 for STX1 binding. Inhibits translocation of GLUT4 from intracellular vesicles to the plasma membrane. The protein is Syntaxin-binding protein 5 (Stxbp5) of Mus musculus (Mouse).